A 449-amino-acid polypeptide reads, in one-letter code: Uridine-cytidine kinase C (449 aa).

58 to 65 contributes to the ATP binding site; the sequence is GPSGAGKT. In terms of domain architecture, CYTH spans 235 to 401; the sequence is NPIYILKSVK…QKSYIELYQD (167 aa).

The protein belongs to the uridine kinase family.

The enzyme catalyses uridine + ATP = UMP + ADP + H(+). It carries out the reaction cytidine + ATP = CMP + ADP + H(+). It participates in pyrimidine metabolism; CTP biosynthesis via salvage pathway; CTP from cytidine: step 1/3. It functions in the pathway pyrimidine metabolism; UMP biosynthesis via salvage pathway; UMP from uridine: step 1/1. Functionally, catalyzes the conversion of uridine into uridine monophosphate and cytidine into cytidine monophosphate in the pyrimidine salvage pathway. The protein is Uridine-cytidine kinase C (udkC) of Dictyostelium discoideum (Social amoeba).